The following is a 308-amino-acid chain: Polyprenal reductase (308 aa).

The Cytoplasmic portion of the chain corresponds to Met1 to Thr2. The helical transmembrane segment at Leu3–Leu23 threads the bilayer. Residues Leu24–Arg65 are Lumenal-facing. A helical membrane pass occupies residues Cys66–Leu86. Residues Arg87–Ser120 lie on the Cytoplasmic side of the membrane. Residues Val121–Phe141 traverse the membrane as a helical segment. The Lumenal portion of the chain corresponds to Val142 to Gly148. Residues Val149–Val169 form a helical membrane-spanning segment. The Cytoplasmic portion of the chain corresponds to Leu170–Asn184. Residues Leu185 to Leu205 form a helical membrane-spanning segment. At His206–Ser255 the chain is on the lumenal side. Residues Ile256 to Leu276 form a helical membrane-spanning segment. At Asn277 to Phe308 the chain is on the cytoplasmic side.

This sequence belongs to the steroid 5-alpha reductase family. Polyprenal reductase subfamily.

It is found in the endoplasmic reticulum membrane. It carries out the reaction a di-trans,poly-cis-dolichal + NADP(+) = a di-trans,poly-cis-polyprenal + NADPH + H(+). The catalysed reaction is a 3-oxo-5alpha-steroid + NADP(+) = a 3-oxo-Delta(4)-steroid + NADPH + H(+). It catalyses the reaction androst-4-ene-3,17-dione + NADPH + H(+) = 5alpha-androstan-3,17-dione + NADP(+). The enzyme catalyses 17beta-hydroxy-5alpha-androstan-3-one + NADP(+) = testosterone + NADPH + H(+). The protein operates within protein modification; protein glycosylation. Functionally, plays a key role in early steps of protein N-linked glycosylation by being involved in the conversion of polyprenol into dolichol. Acts as a polyprenal reductase that mediates the reduction of polyprenal into dolichal in a NADP-dependent mechanism. Dolichols are required for the synthesis of dolichol-linked monosaccharides and the oligosaccharide precursor used for N-glycosylation. Also able to convert testosterone (T) into 5-alpha-dihydrotestosterone (DHT). The chain is Polyprenal reductase (srd5a3) from Xenopus tropicalis (Western clawed frog).